The chain runs to 278 residues: UPF0276 protein Ssed_2857 (278 aa).

It belongs to the UPF0276 family.

This chain is UPF0276 protein Ssed_2857, found in Shewanella sediminis (strain HAW-EB3).